The following is a 262-amino-acid chain: Tropinone reductase homolog At2g30670 (262 aa).

13-37 (LVTGGASGIGHAIVEELAGLGARIY) provides a ligand contact to NADP(+). A substrate-binding site is contributed by S146. Y159 serves as the catalytic Proton acceptor.

This sequence belongs to the short-chain dehydrogenases/reductases (SDR) family. SDR65C subfamily.

The protein is Tropinone reductase homolog At2g30670 of Arabidopsis thaliana (Mouse-ear cress).